A 264-amino-acid polypeptide reads, in one-letter code: uncharacterized protein (264 aa).

Residues 1–22 form the signal peptide; that stretch reads MGYLKKLALFISVIILGIFIIG. Cysteine 23 carries N-palmitoyl cysteine lipidation. A lipid anchor (S-diacylglycerol cysteine) is attached at cysteine 23.

It belongs to the staphylococcal tandem lipoprotein family.

The protein resides in the cell membrane. This is an uncharacterized protein from Staphylococcus aureus (strain N315).